The sequence spans 373 residues: Protein CAF40 (373 aa).

The interval 1-91 (MFSAQKPIYG…ANATRNNPNM (91 aa)) is disordered. Positions 11 to 22 (NGAGVNMGGGGP) are enriched in gly residues. Over residues 50–88 (GGPMLMGNTPNNNNSNENGENNGNNGNNGGNDANATRNN) the composition is skewed to low complexity.

It belongs to the CNOT9 family. In terms of assembly, subunit of the 1.0 MDa CCR4-NOT core complex that contains CCR4, CAF1, NOT1, NOT2, NOT3, NOT4, NOT5, CAF40 and CAF130. In the complex interacts with NOT1. The core complex probably is part of a less characterized 1.9 MDa CCR4-NOT complex.

The protein localises to the cytoplasm. It is found in the nucleus. Functionally, acts as a component of the CCR4-NOT core complex, which in the nucleus seems to be a general transcription factor, and in the cytoplasm the major mRNA deadenylase involved in mRNA turnover. The protein is Protein CAF40 (CAF40) of Saccharomyces cerevisiae (strain ATCC 204508 / S288c) (Baker's yeast).